We begin with the raw amino-acid sequence, 425 residues long: Glucose-1-phosphate adenylyltransferase (425 aa).

Residues Tyr-114, Gly-179, 194–195, and Ser-212 each bind alpha-D-glucose 1-phosphate; that span reads EK.

It belongs to the bacterial/plant glucose-1-phosphate adenylyltransferase family. In terms of assembly, homotetramer.

The enzyme catalyses alpha-D-glucose 1-phosphate + ATP + H(+) = ADP-alpha-D-glucose + diphosphate. The protein operates within glycan biosynthesis; glycogen biosynthesis. In terms of biological role, involved in the biosynthesis of ADP-glucose, a building block required for the elongation reactions to produce glycogen. Catalyzes the reaction between ATP and alpha-D-glucose 1-phosphate (G1P) to produce pyrophosphate and ADP-Glc. In Pectobacterium carotovorum subsp. carotovorum (strain PC1), this protein is Glucose-1-phosphate adenylyltransferase.